A 170-amino-acid chain; its full sequence is RxLR effector protein CRE16 (170 aa).

The signal sequence occupies residues 1–23; sequence MSKLFYAFAVLAVHVLTSSPTTA. The RxLR-dEER motif lies at 47 to 68; that stretch reads RFLRSIHEGEDSLKPSAFSEER.

The protein belongs to the RxLR effector family.

The protein localises to the secreted. It localises to the host cytoplasm. Its subcellular location is the host nucleus. In terms of biological role, effector that is involved in host plant infection. Contributes to virulence during the early infection stage, by inhibiting plant defense responses induced by both PAMP-triggered immunity (PTI) and effector-triggered immunity (ETI). The polypeptide is RxLR effector protein CRE16 (Phytophthora infestans (strain T30-4) (Potato late blight agent)).